Here is a 422-residue protein sequence, read N- to C-terminus: UDP-N-acetylglucosamine 1-carboxyvinyltransferase (422 aa).

Residue 22–23 (KN) coordinates phosphoenolpyruvate. Arg95 contacts UDP-N-acetyl-alpha-D-glucosamine. Cys119 acts as the Proton donor in catalysis. Cys119 bears the 2-(S-cysteinyl)pyruvic acid O-phosphothioketal mark. Residues 124 to 128 (RPIDQ), Asp309, and Val331 each bind UDP-N-acetyl-alpha-D-glucosamine.

Belongs to the EPSP synthase family. MurA subfamily.

Its subcellular location is the cytoplasm. It catalyses the reaction phosphoenolpyruvate + UDP-N-acetyl-alpha-D-glucosamine = UDP-N-acetyl-3-O-(1-carboxyvinyl)-alpha-D-glucosamine + phosphate. Its pathway is cell wall biogenesis; peptidoglycan biosynthesis. In terms of biological role, cell wall formation. Adds enolpyruvyl to UDP-N-acetylglucosamine. This Anaeromyxobacter sp. (strain Fw109-5) protein is UDP-N-acetylglucosamine 1-carboxyvinyltransferase.